The sequence spans 346 residues: Ribosomal RNA small subunit methyltransferase H (346 aa).

Residues 46–48 (GGY), aspartate 63, phenylalanine 90, aspartate 113, and glutamine 120 contribute to the S-adenosyl-L-methionine site. Residues 270–327 (GGSAGSRHMPETHMRLPSFTPAVKGAVGPTPEEEERNPRARSAKLRAGIRTENSPLED) form a disordered region.

This sequence belongs to the methyltransferase superfamily. RsmH family.

It is found in the cytoplasm. It catalyses the reaction cytidine(1402) in 16S rRNA + S-adenosyl-L-methionine = N(4)-methylcytidine(1402) in 16S rRNA + S-adenosyl-L-homocysteine + H(+). Functionally, specifically methylates the N4 position of cytidine in position 1402 (C1402) of 16S rRNA. This Brucella ovis (strain ATCC 25840 / 63/290 / NCTC 10512) protein is Ribosomal RNA small subunit methyltransferase H.